Reading from the N-terminus, the 122-residue chain is Protein FAM223B (122 aa).

It belongs to the FAM223 family.

The chain is Protein FAM223B (FAM223B) from Homo sapiens (Human).